We begin with the raw amino-acid sequence, 942 residues long: Nuclear receptor coactivator 7 (942 aa).

N-acetylmethionine is present on Met-1. Basic and acidic residues predominate over residues 1–12; sequence MDTKEEKKERKQ. Residues 1–46 are disordered; the sequence is MDTKEEKKERKQSYFARLKKKKQAKQNAETASAVATRTHTGKEDNN. Positions 4-29 form a coiled coil; it reads KEEKKERKQSYFARLKKKKQAKQNAE. The segment covering 25 to 38 has biased composition (polar residues); that stretch reads KQNAETASAVATRT. The residue at position 89 (Ser-89) is a Phosphoserine. The region spanning 114-157 is the LysM domain; sequence MEYTAGNQDTLNSIALKFNITPNKLVELNKLFTHTIVPGQVLFV. At Thr-134 the chain carries Phosphothreonine. Residues 161–188 form a disordered region; sequence NSPSSTLRLSSSSPGATVSPSSSDAEYD. The segment covering 162-183 has biased composition (low complexity); it reads SPSSTLRLSSSSPGATVSPSSS. Residues Ser-179, Ser-183, Ser-208, Ser-209, and Ser-211 each carry the phosphoserine modification. Positions 324 to 416 are disordered; it reads KFKSINKEKR…ENFLGEDDDF (93 aa). Positions 356–368 are enriched in polar residues; that stretch reads GHTPTKPSGSSVS. A compositionally biased stretch (basic and acidic residues) spans 369–381; the sequence is EKLKKLDSSRETS. Phosphoserine is present on residues Ser-441, Ser-500, and Ser-502. The TLDc domain maps to 781 to 942; sequence ALLENMHIEQ…VQDLEVWAFD (162 aa).

Belongs to the OXR1 family. Interacts with ESR1, ESR2A, ESR2B, THRB, PPARG and RARA in a ligand-inducible manner. Interacts with the heterodimer AHR-ARNT. Highly expressed in brain. Weakly expressed in mammary gland, ovary, uterus, prostate, stomach, bladder, spinal cord and pancreas. Expressed in cancer cell line.

The protein resides in the nucleus. Its function is as follows. Enhances the transcriptional activities of several nuclear receptors. Involved in the coactivation of different nuclear receptors, such as ESR1, THRB, PPARG and RARA. In Homo sapiens (Human), this protein is Nuclear receptor coactivator 7 (NCOA7).